The following is a 427-amino-acid chain: 3-phosphoshikimate 1-carboxyvinyltransferase (427 aa).

Lys-23, Ser-24, and Arg-28 together coordinate 3-phosphoshikimate. Residue Lys-23 coordinates phosphoenolpyruvate. Phosphoenolpyruvate-binding residues include Gly-97 and Arg-125. 7 residues coordinate 3-phosphoshikimate: Ser-170, Ser-171, Gln-172, Ser-198, Asp-314, Asn-337, and Lys-341. Residue Gln-172 coordinates phosphoenolpyruvate. Residue Asp-314 is the Proton acceptor of the active site. Arg-345, Arg-387, and Lys-412 together coordinate phosphoenolpyruvate.

Belongs to the EPSP synthase family. In terms of assembly, monomer.

It is found in the cytoplasm. It catalyses the reaction 3-phosphoshikimate + phosphoenolpyruvate = 5-O-(1-carboxyvinyl)-3-phosphoshikimate + phosphate. The protein operates within metabolic intermediate biosynthesis; chorismate biosynthesis; chorismate from D-erythrose 4-phosphate and phosphoenolpyruvate: step 6/7. Functionally, catalyzes the transfer of the enolpyruvyl moiety of phosphoenolpyruvate (PEP) to the 5-hydroxyl of shikimate-3-phosphate (S3P) to produce enolpyruvyl shikimate-3-phosphate and inorganic phosphate. The polypeptide is 3-phosphoshikimate 1-carboxyvinyltransferase (Buchnera aphidicola subsp. Acyrthosiphon pisum (strain Tuc7)).